We begin with the raw amino-acid sequence, 237 residues long: Concanavalin-A (237 aa).

Mn(2+) contacts are provided by Glu-8 and Asp-10. Residues Asp-10, Tyr-12, Asn-14, and Asp-19 each coordinate Ca(2+). Asn-14 contacts a carbohydrate. Mn(2+) contacts are provided by Asp-19 and His-24. A carbohydrate is bound by residues 98 to 100, Asp-208, and Arg-228; that span reads GLY.

Belongs to the leguminous lectin family. In terms of assembly, homotetramer. In terms of processing, concanavalin A-like lectins of the Diocleinae subtribe undergo proteolytic processing referred to as circular permutation. The propeptide is split into an N-terminal and a C-terminal part, the gamma and beta chain, respectively. These are then religated in beta-gamma order to form the mature alpha chain. The beta and gamma chains can often be detected in cell extracts. Residues 1-118 of the mature chain, as displayed here, probably constitute the beta chain in the propeptide, residues 119-237 the gamma chain.

Its function is as follows. Glucose/D-mannose specific lectin. The sequence is that of Concanavalin-A from Canavalia cathartica (Jackbean).